The chain runs to 411 residues: UPF0761 membrane protein PA14_51960 (411 aa).

The next 6 membrane-spanning stretches (helical) occupy residues 36 to 56 (LFAVVPMMTVMFSMLSLIPAF), 92 to 112 (HLTWVGVVFLAVTAFTMLVTI), 132 to 152 (FLLYWAILSLGPLLLGAGFAV), 174 to 194 (LLGLMPLAFSVAAFTLLYSAV), 207 to 229 (GGVFTAVLFEAAKTLFGLYVSLF), and 244 to 264 (IFLLWIYLSWMIVLFGAVLVC).

The protein belongs to the UPF0761 family.

The protein resides in the cell inner membrane. This is UPF0761 membrane protein PA14_51960 from Pseudomonas aeruginosa (strain UCBPP-PA14).